The chain runs to 5900 residues: Midasin (5900 aa).

Residues 250 to 270 (GSSVKSKKGGEQQQEGEGEDE) form a disordered region. AAA-ATPase protomer regions lie at residues 278–583 (TNTV…LRKQ), 673–1012 (EKIS…ALNY), 1101–1346 (PIIP…IAGY), 1411–1721 (IVWT…MDKQ), 1840–2089 (RGMQ…HVLT), and 2167–2451 (LENI…EIYM). ATP contacts are provided by residues 302-309 (GVTGSGKT) and 689-696 (GETGTGKT). Residues 796 to 826 (QTTTNNTKENNNNNNNNNNNNNNNNNNKKRT) form a disordered region. The span at 797–821 (TTTNNTKENNNNNNNNNNNNNNNNN) shows a compositional bias: low complexity. Residues 1135 to 1142 (GPTSSGKT), 1438 to 1445 (GETGCSKT), 1852 to 1859 (GSPGVGKT), and 2184 to 2191 (GPTSTSKT) contribute to the ATP site. Residues 2562–4965 (ESAIKSILCE…EGKGKKDVSD (2404 aa)) form a linker region. A disordered region spans residues 4932-5598 (GDDGEGGEGG…SVEEKKLTRE (667 aa)). The span at 4984–5008 (KDEDEDEEKEEKDEDEGFDMQDDFE) shows a compositional bias: acidic residues. The segment covering 5009–5055 (GEMHDIKKDENKDEDKKDDPNNEKENDKEMGDLEKPEDNVVDEKLWD) has biased composition (basic and acidic residues). Residues 5056-5076 (EQDVQDEEEQDEEGKGDETNS) show a composition bias toward acidic residues. Basic and acidic residues predominate over residues 5079-5113 (MMAKQDGKDDNDDDKKDDDKKDDKKKKKEENGKPD). Acidic residues-rich tracts occupy residues 5114 to 5130 (ENEE…EDGK) and 5139 to 5156 (GASD…DDVI). The segment covering 5159 to 5173 (EQEKEENHGDPRGDD) has biased composition (basic and acidic residues). The span at 5174-5199 (QMEIPEDLELEDPDEGKEDDEQQDGG) shows a compositional bias: acidic residues. Residues 5213 to 5224 (DVSKEEEKKKEL) show a composition bias toward basic and acidic residues. Acidic residues-rich tracts occupy residues 5225–5255 (DGDE…EDKE) and 5273–5286 (EGDE…EEDQ). The span at 5297–5313 (ETPKDSEQPLGVKDKTG) shows a compositional bias: basic and acidic residues. Positions 5339–5349 (GMTQPTPSEND) are enriched in polar residues. Residues 5410–5442 (SEPKEKAPKQDPNAKENENQDYEFIKDDEKLDK) are compositionally biased toward basic and acidic residues. Over residues 5448-5460 (QALAAATDTQLQD) the composition is skewed to low complexity. Over residues 5469–5487 (DQAEQEEDQMDIDEEDDMD) the composition is skewed to acidic residues. Basic and acidic residues-rich tracts occupy residues 5488–5536 (VDHK…KDQQ) and 5551–5570 (QFTK…KAVL). The segment covering 5571–5590 (DDGDDQEMEQDGDQDDEESV) has biased composition (acidic residues). In terms of domain architecture, VWFA spans 5696-5889 (QVLLAIDDTE…NIPSILSDTL (194 aa)).

Belongs to the midasin family. Associates with pre-60S ribosomes in the nucleoplasm.

It localises to the nucleus. The protein resides in the nucleolus. The protein localises to the nucleoplasm. In terms of biological role, nuclear chaperone required for maturation and nuclear export of pre-60S ribosome subunits. Functions at successive maturation steps to remove ribosomal factors at critical transition points, first driving the exit of early pre-60S particles from the nucleolus and then driving late pre-60S particles from the nucleus. The chain is Midasin (mdn1) from Dictyostelium discoideum (Social amoeba).